A 164-amino-acid polypeptide reads, in one-letter code: T-cell surface glycoprotein CD3 zeta chain (164 aa).

An N-terminal signal peptide occupies residues 1-21; it reads MKWKALFTAAILQAQLPITEA. Residues 22–30 are Extracellular-facing; that stretch reads QSFGLLDPK. Residues 31 to 51 traverse the membrane as a helical segment; that stretch reads LCYLLDGILFIYGVILTALFL. Residues 52–164 lie on the Cytoplasmic side of the membrane; sequence RVKFSRSADA…ALHMQALPPR (113 aa). S58 carries the post-translational modification Phosphoserine. 3 ITAM domains span residues 61–89, 100–128, and 131–159; these read APAY…LDKR, PQRR…EIGM, and ERRR…LHMQ. Residues Y64, Y72, Y83, Y111, Y123, Y142, and Y153 each carry the phosphotyrosine modification. A compositionally biased stretch (basic and acidic residues) spans 83–96; the sequence is YDVLDKRRGRDPEM. Positions 83 to 111 are disordered; sequence YDVLDKRRGRDPEMGGKPQRRKNPQEGLY. The segment at 128-154 is disordered; sequence MKGERRRGKGHDGLYQGLSTATKDTYD.

It belongs to the CD3Z/FCER1G family. In terms of assembly, the TCR-CD3 complex is composed of a CD3D/CD3E and a CD3G/CD3E heterodimers that preferentially associate with TCRalpha and TCRbeta, respectively, to form TCRalpha/CD3E/CD3G and TCRbeta/CD3G/CD3E trimers. In turn, the hexamer interacts with CD3Z homodimer to form the TCR-CD3 complex. Alternatively, TCRalpha and TCRbeta can be replaced by TCRgamma and TCRdelta. Interacts with SLA. Interacts with TRAT1. Interacts with DOCK2. Interacts with SLA2. Interacts with SHB. Interacts with ZAP70. Interacts (tyrosine phosphorylated) with SHC1 (via SH2 domain). Interacts with PTPRC. Interacts with CRK; this interaction regulates CD3Z phosphorylation. Interacts (on T cell side) with CD81, ICAM1 and CD9 at immunological synapses between antigen-presenting cells and T cells. Interacts with CD160. Interacts with LY6E. The signaling subunit of immunoglobulin gamma (IgG) Fc receptor complex. As a homodimer or a heterodimer with FCER1G, associates with the ligand binding subunit FCGR3A (via transmembrane domain); this interaction is a prerequisite for Fc receptor complex expression on the cell surface. Interacts with CD5. As to quaternary structure, (Microbial infection) Interacts with HIV-1 Nef; this interaction up-regulates the expression of the Fas ligand (FASLG) at the cell surface. (Microbial infection) Interacts with HIV-2 Nef protein; this interaction induces down-regulation of cell surface TCR/CD3 complexes. Post-translationally, phosphorylated on Tyr residues after T-cell receptor triggering by LCK in association with CD4/CD8. As to expression, CD3Z is expressed in normal lymphoid tissue and in peripheral blood mononuclear cells (PBMCs).

It localises to the cell membrane. Functionally, part of the TCR-CD3 complex present on T-lymphocyte cell surface that plays an essential role in adaptive immune response. When antigen presenting cells (APCs) activate T-cell receptor (TCR), TCR-mediated signals are transmitted across the cell membrane by the CD3 chains CD3D, CD3E, CD3G and CD3Z. All CD3 chains contain immunoreceptor tyrosine-based activation motifs (ITAMs) in their cytoplasmic domain. Upon TCR engagement, these motifs become phosphorylated by Src family protein tyrosine kinases LCK and FYN, resulting in the activation of downstream signaling pathways. CD3Z ITAMs phosphorylation creates multiple docking sites for the protein kinase ZAP70 leading to ZAP70 phosphorylation and its conversion into a catalytically active enzyme. Plays an important role in intrathymic T-cell differentiation. Additionally, participates in the activity-dependent synapse formation of retinal ganglion cells (RGCs) in both the retina and dorsal lateral geniculate nucleus (dLGN). This chain is T-cell surface glycoprotein CD3 zeta chain (CD247), found in Homo sapiens (Human).